The following is a 229-amino-acid chain: NAD(P)H-quinone oxidoreductase subunit K, chloroplastic (229 aa).

Residues Cys43, Cys44, Cys108, and Cys139 each coordinate [4Fe-4S] cluster.

It belongs to the complex I 20 kDa subunit family. As to quaternary structure, NDH is composed of at least 16 different subunits, 5 of which are encoded in the nucleus. The cofactor is [4Fe-4S] cluster.

The protein resides in the plastid. It is found in the chloroplast thylakoid membrane. It catalyses the reaction a plastoquinone + NADH + (n+1) H(+)(in) = a plastoquinol + NAD(+) + n H(+)(out). The enzyme catalyses a plastoquinone + NADPH + (n+1) H(+)(in) = a plastoquinol + NADP(+) + n H(+)(out). Functionally, NDH shuttles electrons from NAD(P)H:plastoquinone, via FMN and iron-sulfur (Fe-S) centers, to quinones in the photosynthetic chain and possibly in a chloroplast respiratory chain. The immediate electron acceptor for the enzyme in this species is believed to be plastoquinone. Couples the redox reaction to proton translocation, and thus conserves the redox energy in a proton gradient. This is NAD(P)H-quinone oxidoreductase subunit K, chloroplastic from Aethionema grandiflorum (Persian stone-cress).